The chain runs to 1077 residues: Protein hairless (1077 aa).

Disordered stretches follow at residues 14-75 (NRQT…SNNN), 97-141 (SSTS…HAKT), 269-322 (PSAA…SRPR), 340-368 (TLGR…DQQP), 408-504 (IEKP…PKAK), 533-876 (TTTS…PTSN), and 976-1077 (GQPA…LSKH). Composition is skewed to low complexity over residues 26-75 (NINS…SNNN), 115-130 (TTTP…SSST), 269-286 (PSAA…VTTA), and 293-308 (STSL…IQSS). Composition is skewed to basic and acidic residues over residues 408–439 (IEKP…ESKE) and 449–459 (QPKDETVDVEM). The span at 596–607 (GSGGASSGGAGG) shows a compositional bias: gly residues. The span at 640–684 (PGSSSSSTSPATLSTQPTRLNSSYSIHSLLGGSSGSGSSSFSSSG) shows a compositional bias: low complexity. The segment covering 704–713 (SMYQPSSSSY) has biased composition (polar residues). Phosphoserine occurs at positions 720, 723, 746, and 753. Residues 772-782 (PSTSGSASQDL) are compositionally biased toward polar residues. Low complexity-rich tracts occupy residues 783-798 (SPPR…TPRT) and 811-829 (ASPS…RSAS). The segment covering 837 to 846 (QQQPHLQRSS) has biased composition (polar residues). Over residues 865–876 (AGSPTSAPPTSN) the composition is skewed to low complexity. Positions 984-995 (THPHLAHPHQHP) are enriched in basic residues. Low complexity-rich tracts occupy residues 996–1012 (HPAA…LATP) and 1023–1055 (SATS…SSSA). Over residues 1056–1070 (MFHTSSLRNEQSSDL) the composition is skewed to polar residues.

During embryogenesis expression is primarily in endo- and mesodermal cell layers. Ovary, embryos, larval and pupal imaginal disks.

The protein resides in the nucleus. Its function is as follows. Is a potent antagonist of neurogenic gene activity during sensory organ development. The expression of distinct cell fates by the trichogen (shaft) / tormogen (socket) sister cell pair depends on the level of H activity. A certain threshold level of H activity is required, below which both sister cells adopt the tormogen fate. The polypeptide is Protein hairless (H) (Drosophila melanogaster (Fruit fly)).